Consider the following 95-residue polypeptide: Aspartyl/glutamyl-tRNA(Asn/Gln) amidotransferase subunit C (95 aa).

Belongs to the GatC family. As to quaternary structure, heterotrimer of A, B and C subunits.

It catalyses the reaction L-glutamyl-tRNA(Gln) + L-glutamine + ATP + H2O = L-glutaminyl-tRNA(Gln) + L-glutamate + ADP + phosphate + H(+). The catalysed reaction is L-aspartyl-tRNA(Asn) + L-glutamine + ATP + H2O = L-asparaginyl-tRNA(Asn) + L-glutamate + ADP + phosphate + 2 H(+). In terms of biological role, allows the formation of correctly charged Asn-tRNA(Asn) or Gln-tRNA(Gln) through the transamidation of misacylated Asp-tRNA(Asn) or Glu-tRNA(Gln) in organisms which lack either or both of asparaginyl-tRNA or glutaminyl-tRNA synthetases. The reaction takes place in the presence of glutamine and ATP through an activated phospho-Asp-tRNA(Asn) or phospho-Glu-tRNA(Gln). The protein is Aspartyl/glutamyl-tRNA(Asn/Gln) amidotransferase subunit C of Desulfosudis oleivorans (strain DSM 6200 / JCM 39069 / Hxd3) (Desulfococcus oleovorans).